Reading from the N-terminus, the 142-residue chain is MAP3K7 C-terminal-like protein (142 aa).

As to expression, detected in lung and peripheral blood leukocytes. Expressed predominantly in peripheral blood leukocytes and ubiquitously in adult and fetal tissues. Also expressed strongly in breast carcinoma GI-101, colon adenocarcinoma GI-112, and prostatic adenocarcinoma PC3.

The polypeptide is MAP3K7 C-terminal-like protein (MAP3K7CL) (Homo sapiens (Human)).